Reading from the N-terminus, the 254-residue chain is uncharacterized protein (254 aa).

Transmembrane regions (helical) follow at residues 41–61, 64–84, 91–111, 125–145, 146–166, 172–192, 204–224, and 232–252; these read VFVF…IKII, IFQA…EYFF, IYCG…LYIL, ILIG…FVLA, PAAL…LWSF, FILL…IQLL, MLLA…VLTP, and IIMS…LFLL.

Belongs to the TatC family.

Its subcellular location is the plastid. It localises to the chloroplast membrane. This is an uncharacterized protein from Porphyra purpurea (Red seaweed).